The chain runs to 298 residues: tRNA dimethylallyltransferase (298 aa).

Position 16–23 (16–23 (GPTASGKS)) interacts with ATP. 18–23 (TASGKS) is a binding site for substrate. Interaction with substrate tRNA regions lie at residues 41–44 (DSMQ) and 165–169 (QRIVR).

This sequence belongs to the IPP transferase family. In terms of assembly, monomer. Mg(2+) is required as a cofactor.

It carries out the reaction adenosine(37) in tRNA + dimethylallyl diphosphate = N(6)-dimethylallyladenosine(37) in tRNA + diphosphate. In terms of biological role, catalyzes the transfer of a dimethylallyl group onto the adenine at position 37 in tRNAs that read codons beginning with uridine, leading to the formation of N6-(dimethylallyl)adenosine (i(6)A). The protein is tRNA dimethylallyltransferase of Rhizobium rhizogenes (strain K84 / ATCC BAA-868) (Agrobacterium radiobacter).